Here is an 87-residue protein sequence, read N- to C-terminus: UPF0335 protein RL4065 (87 aa).

It belongs to the UPF0335 family.

This chain is UPF0335 protein RL4065, found in Rhizobium johnstonii (strain DSM 114642 / LMG 32736 / 3841) (Rhizobium leguminosarum bv. viciae).